Reading from the N-terminus, the 84-residue chain is Large ribosomal subunit protein bL27 (84 aa).

The disordered stretch occupies residues 1 to 21 (MAHKKAGGSTRNGRDSNPKYL).

This sequence belongs to the bacterial ribosomal protein bL27 family.

The polypeptide is Large ribosomal subunit protein bL27 (Francisella tularensis subsp. holarctica (strain FTNF002-00 / FTA)).